Here is a 690-residue protein sequence, read N- to C-terminus: Serotransferrin (690 aa).

The N-terminal stretch at 1–17 (MKPLLLLTLLGCLAAAL) is a signal peptide. 2 Transferrin-like domains span residues 24–329 (VKWC…SLKK) and 340–670 (IKWC…SLRK). A disulfide bridge connects residues Cys27 and Cys49. Asp73 and Tyr103 together coordinate Fe(3+). 3 disulfides stabilise this stretch: Cys126-Cys206, Cys171-Cys185, and Cys234-Cys248. Hydrogencarbonate is bound by residues Thr128, Lys132, Ala134, and Gly135. Tyr200 lines the Fe(3+) pocket. Residue His256 participates in Fe(3+) binding. Cystine bridges form between Cys343-Cys379 and Cys353-Cys370. Residues Asp394 and Tyr429 each contribute to the Fe(3+) site. 7 disulfides stabilise this stretch: Cys404/Cys682, Cys419/Cys643, Cys452/Cys530, Cys476/Cys671, Cys486/Cys499, Cys496/Cys513, and Cys570/Cys584. 4 residues coordinate hydrogencarbonate: Thr454, Arg458, Ala460, and Gly461. Tyr524 contributes to the Fe(3+) binding site. A Fe(3+)-binding site is contributed by His592.

Belongs to the transferrin family. In terms of assembly, monomer.

It localises to the secreted. Transferrins are iron binding transport proteins which can bind two Fe(3+) ions in association with the binding of an anion, usually bicarbonate. This chain is Serotransferrin (tf), found in Oryzias latipes (Japanese rice fish).